The following is a 511-amino-acid chain: DEP domain-containing protein 7 (511 aa).

Positions 46–136 (LQTQVEVKKR…SSCSLYRFTT (91 aa)) constitute a DEP domain.

This sequence belongs to the DEPDC7 family. Expressed in liver.

In Homo sapiens (Human), this protein is DEP domain-containing protein 7 (DEPDC7).